Here is a 114-residue protein sequence, read N- to C-terminus: Large ribosomal subunit protein bL20c (114 aa).

It belongs to the bacterial ribosomal protein bL20 family.

Its subcellular location is the plastid. The protein localises to the chloroplast. Binds directly to 23S ribosomal RNA and is necessary for the in vitro assembly process of the 50S ribosomal subunit. It is not involved in the protein synthesizing functions of that subunit. This chain is Large ribosomal subunit protein bL20c, found in Psilotum nudum (Whisk fern).